Reading from the N-terminus, the 383-residue chain is ATP phosphoribosyltransferase regulatory subunit (383 aa).

It belongs to the class-II aminoacyl-tRNA synthetase family. HisZ subfamily. As to quaternary structure, heteromultimer composed of HisG and HisZ subunits.

It localises to the cytoplasm. Its pathway is amino-acid biosynthesis; L-histidine biosynthesis; L-histidine from 5-phospho-alpha-D-ribose 1-diphosphate: step 1/9. Functionally, required for the first step of histidine biosynthesis. May allow the feedback regulation of ATP phosphoribosyltransferase activity by histidine. The polypeptide is ATP phosphoribosyltransferase regulatory subunit (Cupriavidus pinatubonensis (strain JMP 134 / LMG 1197) (Cupriavidus necator (strain JMP 134))).